A 301-amino-acid polypeptide reads, in one-letter code: uncharacterized protein (301 aa).

The next 9 membrane-spanning stretches (helical) occupy residues 1–21, 33–53, 72–92, 101–121, 124–144, 185–205, 220–240, 246–266, and 270–290; these read MSWI…LGIV, SVLF…YFYY, AMSL…KIPG, FGII…TILI, FAWL…KTFY, YFTP…VFAI, IIYT…FCLA, FSYI…KIFI, and IAIP…FGII.

The protein belongs to the TerC family.

It localises to the cell membrane. This is an uncharacterized protein from Rickettsia felis (strain ATCC VR-1525 / URRWXCal2) (Rickettsia azadi).